Reading from the N-terminus, the 232-residue chain is Octanoyltransferase (232 aa).

The region spanning 32 to 219 (DTIYDTLILL…SFMVFNFSSC (188 aa)) is the BPL/LPL catalytic domain. Substrate-binding positions include 77-84 (RGGDITYH), 140-142 (AIG), and 153-155 (GFA). Cys-171 functions as the Acyl-thioester intermediate in the catalytic mechanism.

This sequence belongs to the LipB family.

The protein localises to the cytoplasm. It catalyses the reaction octanoyl-[ACP] + L-lysyl-[protein] = N(6)-octanoyl-L-lysyl-[protein] + holo-[ACP] + H(+). The protein operates within protein modification; protein lipoylation via endogenous pathway; protein N(6)-(lipoyl)lysine from octanoyl-[acyl-carrier-protein]: step 1/2. Its function is as follows. Catalyzes the transfer of endogenously produced octanoic acid from octanoyl-acyl-carrier-protein onto the lipoyl domains of lipoate-dependent enzymes. Lipoyl-ACP can also act as a substrate although octanoyl-ACP is likely to be the physiological substrate. This is Octanoyltransferase from Dictyoglomus thermophilum (strain ATCC 35947 / DSM 3960 / H-6-12).